The following is a 154-amino-acid chain: Transcriptional repressor NrdR (154 aa).

A zinc finger lies at 3–34 (CPFCGAEDTAVADTRLNDEADVVRRRRKCNAC). Residues 49–139 (PQVVKKNGLR…VYRNFEDVDA (91 aa)) form the ATP-cone domain.

It belongs to the NrdR family. Zn(2+) serves as cofactor.

Negatively regulates transcription of bacterial ribonucleotide reductase nrd genes and operons by binding to NrdR-boxes. In Dechloromonas aromatica (strain RCB), this protein is Transcriptional repressor NrdR.